Reading from the N-terminus, the 335-residue chain is Thioredoxin reductase (335 aa).

FAD is bound by residues 22–25 (SGPA), 44–51 (EGTSFGGA), asparagine 60, and valine 93. The cysteines at positions 145 and 148 are disulfide-linked. Serine 166, histidine 185, arginine 191, isoleucine 248, and tyrosine 268 together coordinate NADP(+). FAD-binding positions include aspartate 288 and 295–298 (RQAV). An NADP(+)-binding site is contributed by arginine 295.

It belongs to the class-II pyridine nucleotide-disulfide oxidoreductase family. Homodimer. It depends on FAD as a cofactor.

It localises to the cytoplasm. It carries out the reaction [thioredoxin]-dithiol + NADP(+) = [thioredoxin]-disulfide + NADPH + H(+). This chain is Thioredoxin reductase, found in Mycobacterium tuberculosis (strain CDC 1551 / Oshkosh).